Reading from the N-terminus, the 118-residue chain is Large ribosomal subunit protein bL20 (118 aa).

Belongs to the bacterial ribosomal protein bL20 family.

In terms of biological role, binds directly to 23S ribosomal RNA and is necessary for the in vitro assembly process of the 50S ribosomal subunit. It is not involved in the protein synthesizing functions of that subunit. In Pseudomonas entomophila (strain L48), this protein is Large ribosomal subunit protein bL20.